We begin with the raw amino-acid sequence, 499 residues long: Alpha-amylase A type-1/2 (499 aa).

A signal peptide spans Met-1 to Ala-21. The cysteines at positions 51 and 59 are disulfide-linked. 2 residues coordinate substrate: Gln-56 and Trp-104. Asn-142 serves as a coordination point for Ca(2+). His-143 is a substrate binding site. Cys-171 and Cys-185 are joined by a disulfide. Residues Glu-183 and Asp-196 each contribute to the Ca(2+) site. Residue Asn-218 is glycosylated (N-linked (GlcNAc...) asparagine). A substrate-binding site is contributed by Arg-225. Asp-227, His-231, and Glu-251 together coordinate Ca(2+). The active-site Nucleophile is Asp-227. Lys-230–His-231 lines the substrate pocket. Glu-251 acts as the Proton donor in catalysis. Position 255 (Gly-255) interacts with substrate. Cysteines 261 and 304 form a disulfide. Asp-318 and Arg-365 together coordinate substrate. A disulfide bridge connects residues Cys-461 and Cys-496.

The protein belongs to the glycosyl hydrolase 13 family. As to quaternary structure, monomer. It depends on Ca(2+) as a cofactor.

The protein resides in the secreted. The catalysed reaction is Endohydrolysis of (1-&gt;4)-alpha-D-glucosidic linkages in polysaccharides containing three or more (1-&gt;4)-alpha-linked D-glucose units.. The protein is Alpha-amylase A type-1/2 (amy1) of Aspergillus oryzae (strain ATCC 42149 / RIB 40) (Yellow koji mold).